A 573-amino-acid chain; its full sequence is PCNA-interacting partner (573 aa).

The interval 492 to 532 (TGGQVKNKPCKNVANKRSKRKQVDIQSETTNAQENEPPQKK) is disordered. Over residues 515–527 (DIQSETTNAQENE) the composition is skewed to polar residues.

Belongs to the PARI family.

The protein resides in the cytoplasm. The protein localises to the nucleus. In terms of biological role, required to suppress inappropriate homologous recombination, thereby playing a central role DNA repair and in the maintenance of genomic stability. The protein is PCNA-interacting partner (parpbp) of Xenopus tropicalis (Western clawed frog).